The sequence spans 151 residues: 3-hydroxyacyl-[acyl-carrier-protein] dehydratase FabZ (151 aa).

Residue H57 is part of the active site.

The protein belongs to the thioester dehydratase family. FabZ subfamily.

It localises to the cytoplasm. It catalyses the reaction a (3R)-hydroxyacyl-[ACP] = a (2E)-enoyl-[ACP] + H2O. Involved in unsaturated fatty acids biosynthesis. Catalyzes the dehydration of short chain beta-hydroxyacyl-ACPs and long chain saturated and unsaturated beta-hydroxyacyl-ACPs. The protein is 3-hydroxyacyl-[acyl-carrier-protein] dehydratase FabZ of Synechococcus sp. (strain CC9605).